The sequence spans 507 residues: ATP synthase subunit alpha, chloroplastic (507 aa).

Gly-170–Thr-177 provides a ligand contact to ATP.

The protein belongs to the ATPase alpha/beta chains family. F-type ATPases have 2 components, CF(1) - the catalytic core - and CF(0) - the membrane proton channel. CF(1) has five subunits: alpha(3), beta(3), gamma(1), delta(1), epsilon(1). CF(0) has four main subunits: a, b, b' and c.

Its subcellular location is the plastid. The protein resides in the chloroplast thylakoid membrane. The catalysed reaction is ATP + H2O + 4 H(+)(in) = ADP + phosphate + 5 H(+)(out). Produces ATP from ADP in the presence of a proton gradient across the membrane. The alpha chain is a regulatory subunit. This chain is ATP synthase subunit alpha, chloroplastic, found in Lemna minor (Common duckweed).